The chain runs to 421 residues: UDP-N-acetylglucosamine 1-carboxyvinyltransferase (421 aa).

Phosphoenolpyruvate is bound at residue 22 to 23 (KN). Residue Arg93 participates in UDP-N-acetyl-alpha-D-glucosamine binding. Cys117 functions as the Proton donor in the catalytic mechanism. Cys117 carries the post-translational modification 2-(S-cysteinyl)pyruvic acid O-phosphothioketal. UDP-N-acetyl-alpha-D-glucosamine is bound by residues 122–126 (RPVDL), Asp308, and Ile330.

The protein belongs to the EPSP synthase family. MurA subfamily.

The protein localises to the cytoplasm. The enzyme catalyses phosphoenolpyruvate + UDP-N-acetyl-alpha-D-glucosamine = UDP-N-acetyl-3-O-(1-carboxyvinyl)-alpha-D-glucosamine + phosphate. It functions in the pathway cell wall biogenesis; peptidoglycan biosynthesis. Cell wall formation. Adds enolpyruvyl to UDP-N-acetylglucosamine. In Pseudomonas entomophila (strain L48), this protein is UDP-N-acetylglucosamine 1-carboxyvinyltransferase.